Consider the following 218-residue polypeptide: Pyridoxine/pyridoxamine 5'-phosphate oxidase (218 aa).

Residues 14–17 and Lys72 each bind substrate; that span reads RREY. FMN contacts are provided by residues 67–72, 82–83, Arg88, Lys89, and Gln111; these read RIVLLK and YT. Substrate contacts are provided by Tyr129, Arg133, and Ser137. Residues 146 to 147 and Trp191 contribute to the FMN site; that span reads QS. Residue 197-199 coordinates substrate; it reads RLH. Arg201 serves as a coordination point for FMN.

It belongs to the pyridoxamine 5'-phosphate oxidase family. Homodimer. Requires FMN as cofactor.

The catalysed reaction is pyridoxamine 5'-phosphate + O2 + H2O = pyridoxal 5'-phosphate + H2O2 + NH4(+). It catalyses the reaction pyridoxine 5'-phosphate + O2 = pyridoxal 5'-phosphate + H2O2. It participates in cofactor metabolism; pyridoxal 5'-phosphate salvage; pyridoxal 5'-phosphate from pyridoxamine 5'-phosphate: step 1/1. Its pathway is cofactor metabolism; pyridoxal 5'-phosphate salvage; pyridoxal 5'-phosphate from pyridoxine 5'-phosphate: step 1/1. Its function is as follows. Catalyzes the oxidation of either pyridoxine 5'-phosphate (PNP) or pyridoxamine 5'-phosphate (PMP) into pyridoxal 5'-phosphate (PLP). The sequence is that of Pyridoxine/pyridoxamine 5'-phosphate oxidase from Escherichia coli O139:H28 (strain E24377A / ETEC).